Reading from the N-terminus, the 352-residue chain is Homocitrate synthase, omega subunit (352 aa).

The protein belongs to the alpha-IPM synthase/homocitrate synthase family. Heterodimer of an alpha and an omega chain.

It catalyses the reaction acetyl-CoA + 2-oxoglutarate + H2O = (2R)-homocitrate + CoA + H(+). This protein is a Fe-Mo-cofactor biosynthetic component. The chain is Homocitrate synthase, omega subunit (nifV-OMEGA) from Clostridium pasteurianum.